Here is an 823-residue protein sequence, read N- to C-terminus: Dolichyl-diphosphooligosaccharide--protein glycosyltransferase subunit STT3B (823 aa).

Residues 1–58 are disordered; the sequence is MAEPSAPESKHKSSLNSSPWSGLMALGNSRHGHHGPGTQSASSAAAPKPGPPAGLSGG. Position 2 is an N-acetylalanine (Ala2). The Cytoplasmic portion of the chain corresponds to 2–41; the sequence is AEPSAPESKHKSSLNSSPWSGLMALGNSRHGHHGPGTQSA. Ser13, Ser18, and Ser29 each carry phosphoserine. The helical transmembrane segment at 42-83 threads the bilayer; that stretch reads SSAAAPKPGPPAGLSGGLSQPAGWQSLLSFTILFLAWLAGFS. Residues 84–170 lie on the Lumenal side of the membrane; it reads SRLFAVIRFE…VHIRDVCVFL (87 aa). Positions 98–100 match the DXD motif 1 motif; the sequence is EFD. Mn(2+) is bound at residue Asp100. A helical transmembrane segment spans residues 171–189; the sequence is APTFSGLTSISTFLLTREL. The Cytoplasmic segment spans residues 190 to 191; it reads WN. The helical transmembrane segment at 192-209 threads the bilayer; that stretch reads QGAGLLAACFIAIVPGYI. At 210 to 220 the chain is on the lumenal side; that stretch reads SRSVAGSFDNE. Residues Asp218 and Glu220 each contribute to the Mn(2+) site. Positions 218–220 match the DXD motif 2 motif; it reads DNE. A helical membrane pass occupies residues 221–240; it reads GIAIFALQFTYYLWVKSVKT. The Cytoplasmic portion of the chain corresponds to 241–242; it reads GS. The helical transmembrane segment at 243–257 threads the bilayer; that stretch reads VFWTMCCCLSYFYMV. Residues 258–262 lie on the Lumenal side of the membrane; the sequence is SAWGG. Residues 263–279 traverse the membrane as a helical segment; the sequence is YVFIINLIPLHVFVLLL. Residues 280-284 are Cytoplasmic-facing; the sequence is MQRYS. Residues 285 to 310 form a helical membrane-spanning segment; it reads KRVYIAYSTFYIVGLILSMQIPFVGF. The Lumenal portion of the chain corresponds to 311-318; sequence QPIRTSEH. The chain crosses the membrane as a helical span at residues 319-338; it reads MAAAGVFALLQAYAFLQYLR. Residues 339-347 are Cytoplasmic-facing; sequence DRLTKQEFQ. Residues 348-368 traverse the membrane as a helical segment; that stretch reads TLFFLGVSLAAGAVFLSVIYL. Topologically, residues 369–407 are lumenal; it reads TYTGYIAPWSGRFYSLWDTGYAKIHIPIIASVSEHQPTT. Residues 399–402 carry the SVSE motif motif; sequence SVSE. A helical transmembrane segment spans residues 408-430; it reads WVSFFFDLHILVCTFPAGLWFCI. Over 431-436 the chain is Cytoplasmic; the sequence is KNINDE. The chain crosses the membrane as a helical span at residues 437 to 453; sequence RVFVALYAISAVYFAGV. Over 454 to 457 the chain is Lumenal; sequence MVRL. Residue Arg456 participates in dolichyl diphosphooligosaccharide binding. Residues 458–479 traverse the membrane as a helical segment; the sequence is MLTLTPVVCMLSAIAFSNVFEH. The Cytoplasmic segment spans residues 480 to 523; the sequence is YLGDDMKRENPPVEDSSDEDDKRNPGNLYDKAGKVRKHVTEQEK. A disordered region spans residues 487–526; that stretch reads RENPPVEDSSDEDDKRNPGNLYDKAGKVRKHVTEQEKPEE. Residues Ser495 and Ser496 each carry the phosphoserine modification. A compositionally biased stretch (basic and acidic residues) spans 517 to 526; that stretch reads HVTEQEKPEE. The helical transmembrane segment at 524–549 threads the bilayer; sequence PEEGLGPNIKSIVTMLMLMLLMMFAV. Topologically, residues 550–823 are lumenal; sequence HCTWVTSNAY…KGKKTSKKTV (274 aa). The tract at residues 601–603 is interacts with target acceptor peptide in protein substrate; it reads WWD. The short motif at 601–605 is the WWDYG motif element; it reads WWDYG. Tyr606 provides a ligand contact to dolichyl diphosphooligosaccharide. 2 N-linked (GlcNAc...) asparagine glycosylation sites follow: Asn613 and Asn620. An N-linked (GlcNAc...) (high mannose) asparagine glycan is attached at Asn624. N-linked (GlcNAc...) asparagine glycosylation occurs at Asn638. Positions 668 to 675 match the DK motif motif; sequence DINKFLWM.

It belongs to the STT3 family. In terms of assembly, component of the oligosaccharyltransferase (OST) complex. There are 2 OST complexes, OST-A and OST-B, which contain STT3A or STT3B as catalytic subunit, respectively. OST-A and OST-B contain common core subunits RPN1, RPN2, OST48, OST4, DAD1 and TMEM258, and OST-B contains either MAGT1 or TUSC3 as specific accessory subunit. Requires Mg(2+) as cofactor. The cofactor is Mn(2+).

The protein localises to the endoplasmic reticulum membrane. The enzyme catalyses a di-trans,poly-cis-dolichyl diphosphooligosaccharide + L-asparaginyl-[protein] = N(4)-(oligosaccharide-(1-&gt;4)-N-acetyl-beta-D-glucosaminyl-(1-&gt;4)-N-acetyl-beta-D-glucosaminyl)-L-asparaginyl-[protein] + a di-trans,poly-cis-dolichyl diphosphate + H(+). It functions in the pathway protein modification; protein glycosylation. Catalytic subunit of the oligosaccharyl transferase (OST) complex that catalyzes the initial transfer of a defined glycan (Glc(3)Man(9)GlcNAc(2) in eukaryotes) from the lipid carrier dolichol-pyrophosphate to an asparagine residue within an Asn-X-Ser/Thr consensus motif in nascent polypeptide chains, the first step in protein N-glycosylation. N-glycosylation occurs cotranslationally and the complex associates with the Sec61 complex at the channel-forming translocon complex that mediates protein translocation across the endoplasmic reticulum (ER). All subunits are required for a maximal enzyme activity. This subunit contains the active site and the acceptor peptide and donor lipid-linked oligosaccharide (LLO) binding pockets. STT3B is present in a small subset of OST complexes and mediates both cotranslational and post-translational N-glycosylation of target proteins: STT3B-containing complexes are required for efficient post-translational glycosylation and while they are less competent than STT3A-containing complexes for cotranslational glycosylation, they have the ability to mediate glycosylation of some nascent sites that are not accessible for STT3A. STT3B-containing complexes also act post-translationally and mediate modification of skipped glycosylation sites in unfolded proteins. Plays a role in ER-associated degradation (ERAD) pathway that mediates ubiquitin-dependent degradation of misfolded endoplasmic reticulum proteins by mediating N-glycosylation of unfolded proteins, which are then recognized by the ERAD pathway and targeted for degradation. In Mus musculus (Mouse), this protein is Dolichyl-diphosphooligosaccharide--protein glycosyltransferase subunit STT3B.